The sequence spans 501 residues: Raftlin-2 (501 aa).

Disordered stretches follow at residues 1–20 (MGCG…GKIF) and 196–239 (SWNE…RKGE). Glycine 2 carries N-myristoyl glycine lipidation. The S-palmitoyl cysteine moiety is linked to residue cysteine 3. Polar residues predominate over residues 220–233 (GQYQMEQNGSPTSS). A Phosphoserine modification is found at serine 405. A disordered region spans residues 407-449 (AQTPDKKASRHIKGEDKNKATSRSIGLDTTSSQPAESRHLPEE). Threonine 409 is modified (phosphothreonine). The span at 410–425 (PDKKASRHIKGEDKNK) shows a compositional bias: basic and acidic residues. Residues 427–441 (TSRSIGLDTTSSQPA) show a composition bias toward polar residues. Serine 430 carries the phosphoserine modification.

The protein belongs to the raftlin family.

The protein resides in the cell membrane. Upon bacterial lipopolysaccharide stimulation, mediates clathrin-dependent internalization of TLR4 in dendritic cells, resulting in activation of TICAM1-mediated signaling and subsequent IFNB1 production. May regulate B-cell antigen receptor-mediated signaling. The polypeptide is Raftlin-2 (RFTN2) (Homo sapiens (Human)).